We begin with the raw amino-acid sequence, 446 residues long: 5-methylthioadenosine/S-adenosylhomocysteine deaminase (446 aa).

2 residues coordinate Zn(2+): His-72 and His-74. Substrate-binding residues include Glu-101 and His-194. Position 221 (His-221) interacts with Zn(2+). Substrate-binding residues include Glu-224 and Asp-309. Asp-309 is a Zn(2+) binding site.

The protein belongs to the metallo-dependent hydrolases superfamily. MTA/SAH deaminase family. Requires Zn(2+) as cofactor.

It catalyses the reaction S-adenosyl-L-homocysteine + H2O + H(+) = S-inosyl-L-homocysteine + NH4(+). It carries out the reaction S-methyl-5'-thioadenosine + H2O + H(+) = S-methyl-5'-thioinosine + NH4(+). In terms of biological role, catalyzes the deamination of 5-methylthioadenosine and S-adenosyl-L-homocysteine into 5-methylthioinosine and S-inosyl-L-homocysteine, respectively. Is also able to deaminate adenosine. This is 5-methylthioadenosine/S-adenosylhomocysteine deaminase from Saccharophagus degradans (strain 2-40 / ATCC 43961 / DSM 17024).